A 315-amino-acid chain; its full sequence is MMQSSKWNAMSLLMDEKTKQAEVLRTAIDEADAIVIGIGAGMSASDGFTYVGERFTENFPDFIEKYRFFDMLQASLHPYGSWQEYWAFESRFITLNYLDQPVGQSYLALKSLVEGKQYHIITTNADNAFDAAEYDMTHVFHIQGEYILQQCSQHCHAQTYRNDDLIRKMVVAQQDMLIPWEMIPRCPKCDAPMEVNKRKAEVGMVEDAEFHAQLQRYNAFLEQHQDDKVLYLEIGIGYTTPQFVKHPFQRMTRKNENAIYMTMNKKAYRIPNSIQERTIHLTEDISTLITTALRNDSTTQNNNIGETEDVLNRTD.

Positions 13-299 constitute a Deacetylase sirtuin-type domain; it reads LMDEKTKQAE…TTALRNDSTT (287 aa). NAD(+) contacts are provided by residues Ala-40, 123 to 126, and Gln-143; that span reads TNAD. The Zn(2+) site is built by Cys-151, Cys-155, Cys-186, and Cys-189. Residues 238 to 240, Asn-264, Tyr-268, and Ile-285 contribute to the NAD(+) site; that span reads YTT.

The protein belongs to the sirtuin family. Class M subfamily. Zn(2+) serves as cofactor.

It catalyses the reaction L-aspartyl-[protein] + NAD(+) = 4-O-(ADP-D-ribosyl)-L-aspartyl-[protein] + nicotinamide. With respect to regulation, is inhibited by Tenovin-6 in vitro, but not by nicotinamide. Its function is as follows. Catalyzes specifically the mono-ADP-ribosylation of GcvH-L (SAV0324). This activity is dependent on prior lipoylation of the target protein. May be involved in the modulation of the response to host-derived oxidative stress. In contrast to other sirtuin classes, lacks protein deacylase activity, being unable to catalyze delipoylation, debiotinylation, deacetylation and desuccinylation of proteins. This Staphylococcus aureus (strain Mu50 / ATCC 700699) protein is Protein ADP-ribosyltransferase.